We begin with the raw amino-acid sequence, 35 residues long: uncharacterized protein (35 aa).

An N-terminal signal peptide occupies residues 1 to 25; sequence MTERKLLQLLRRPFISLSLFTALRA.

This is an uncharacterized protein from Saccharomyces cerevisiae (strain ATCC 204508 / S288c) (Baker's yeast).